We begin with the raw amino-acid sequence, 541 residues long: Zinc finger protein 503 (541 aa).

Residues 1-18 (MSNSPLGSGSRISHFTTE) are compositionally biased toward polar residues. Disordered regions lie at residues 1–49 (MSNS…QAGR) and 97–255 (TCSQ…SSSV). A compositionally biased stretch (basic and acidic residues) spans 137–157 (AEDKSSFKPYSKHPDKKDQSA). Over residues 236–255 (SLSAAPSPTPASSSSSSSSV) the composition is skewed to low complexity. The segment at 411-439 (HVCNWVSATGPCDKRFSSSEELLGHLRTH) adopts a C2H2-type zinc-finger fold. Residues 474 to 511 (GASPGPLTLRSPHHHPLGLSSSRYHPYSKSPLPSGGAP) are disordered.

It belongs to the Elbow/Noc family.

It is found in the nucleus. May function as a transcriptional repressor. In Xenopus tropicalis (Western clawed frog), this protein is Zinc finger protein 503 (znf503).